Consider the following 707-residue polypeptide: Polyribonucleotide nucleotidyltransferase (707 aa).

Residues D485 and D491 each coordinate Mg(2+). A KH domain is found at 552–611; it reads PRIHTMKINSDKIKDVIGKGGAVIRALTEETGTTIEIEDDGTIKIAATEGAAAKEAIRRI. The region spanning 621 to 689 is the S1 motif domain; that stretch reads GRIYTGKVMR…RQGRIRLSMK (69 aa).

It belongs to the polyribonucleotide nucleotidyltransferase family. In terms of assembly, component of the RNA degradosome, which is a multiprotein complex involved in RNA processing and mRNA degradation. Mg(2+) is required as a cofactor.

Its subcellular location is the cytoplasm. It carries out the reaction RNA(n+1) + phosphate = RNA(n) + a ribonucleoside 5'-diphosphate. Involved in mRNA degradation. Catalyzes the phosphorolysis of single-stranded polyribonucleotides processively in the 3'- to 5'-direction. The sequence is that of Polyribonucleotide nucleotidyltransferase from Photobacterium profundum (strain SS9).